A 66-amino-acid chain; its full sequence is Large ribosomal subunit protein bL32 (66 aa).

Residues 1–19 (MAVPKRKMSRSNTRARRSQ) show a composition bias toward basic residues. A disordered region spans residues 1–20 (MAVPKRKMSRSNTRARRSQW).

This sequence belongs to the bacterial ribosomal protein bL32 family.

This chain is Large ribosomal subunit protein bL32, found in Beutenbergia cavernae (strain ATCC BAA-8 / DSM 12333 / CCUG 43141 / JCM 11478 / NBRC 16432 / NCIMB 13614 / HKI 0122).